Reading from the N-terminus, the 526-residue chain is Acetyl-CoA hydrolase (526 aa).

The residue at position 2 (threonine 2) is an N-acetylthreonine. A CoA-binding site is contributed by 277-281; it reads GIGNI. Glutamate 302 (5-glutamyl coenzyme A thioester intermediate) is an active-site residue. Serine 350 carries the phosphoserine modification. CoA contacts are provided by asparagine 392 and glycine 396.

Belongs to the acetyl-CoA hydrolase/transferase family. As to quaternary structure, monomer. Post-translationally, glycosylated; contains mannose.

Its subcellular location is the cytoplasm. It catalyses the reaction acetyl-CoA + H2O = acetate + CoA + H(+). In terms of biological role, presumably involved in regulating the intracellular acetyl-CoA pool for fatty acid and cholesterol synthesis and fatty acid oxidation. It may be involved in overall regulation of acetylation during melatonin synthesis. This Saccharomyces cerevisiae (strain ATCC 204508 / S288c) (Baker's yeast) protein is Acetyl-CoA hydrolase (ACH1).